The primary structure comprises 452 residues: Chromosomal replication initiator protein DnaA (452 aa).

The tract at residues 1–72 (MPDMLTLWTD…LVEYAYQAAH (72 aa)) is domain I, interacts with DnaA modulators. Positions 72 to 114 (HEDIQPVLILENERQQQATLKAKTAPVAAGEPVEPTPTFMKET) are domain II. The domain III, AAA+ region stretch occupies residues 115 to 331 (ALNSRYTFDT…GALARVQAYS (217 aa)). Glycine 159, glycine 161, lysine 162, and threonine 163 together coordinate ATP. The interval 332-452 (QLMHQPIATD…IDSLKDDLRR (121 aa)) is domain IV, binds dsDNA.

It belongs to the DnaA family. As to quaternary structure, oligomerizes as a right-handed, spiral filament on DNA at oriC.

It localises to the cytoplasm. In terms of biological role, plays an essential role in the initiation and regulation of chromosomal replication. ATP-DnaA binds to the origin of replication (oriC) to initiate formation of the DNA replication initiation complex once per cell cycle. Binds the DnaA box (a 9 base pair repeat at the origin) and separates the double-stranded (ds)DNA. Forms a right-handed helical filament on oriC DNA; dsDNA binds to the exterior of the filament while single-stranded (ss)DNA is stabiized in the filament's interior. The ATP-DnaA-oriC complex binds and stabilizes one strand of the AT-rich DNA unwinding element (DUE), permitting loading of DNA polymerase. After initiation quickly degrades to an ADP-DnaA complex that is not apt for DNA replication. Binds acidic phospholipids. In Levilactobacillus brevis (strain ATCC 367 / BCRC 12310 / CIP 105137 / JCM 1170 / LMG 11437 / NCIMB 947 / NCTC 947) (Lactobacillus brevis), this protein is Chromosomal replication initiator protein DnaA.